Here is a 78-residue protein sequence, read N- to C-terminus: Translation initiation factor IF-1 (78 aa).

An S1-like domain is found at 2–78 (SKNNLNETES…TRARITYRFK (77 aa)).

This sequence belongs to the IF-1 family. Component of the 30S ribosomal translation pre-initiation complex which assembles on the 30S ribosome in the order IF-2 and IF-3, IF-1 and N-formylmethionyl-tRNA(fMet); mRNA recruitment can occur at any time during PIC assembly.

It is found in the cytoplasm. Its function is as follows. One of the essential components for the initiation of protein synthesis. Stabilizes the binding of IF-2 and IF-3 on the 30S subunit to which N-formylmethionyl-tRNA(fMet) subsequently binds. Helps modulate mRNA selection, yielding the 30S pre-initiation complex (PIC). Upon addition of the 50S ribosomal subunit IF-1, IF-2 and IF-3 are released leaving the mature 70S translation initiation complex. This chain is Translation initiation factor IF-1, found in Onion yellows phytoplasma (strain OY-M).